The primary structure comprises 67 residues: ATP synthase protein 8 (67 aa).

The helical transmembrane segment at Thr8–Met24 threads the bilayer. Lys54 is subject to N6-acetyllysine; alternate. Lys54 bears the N6-succinyllysine; alternate mark. N6-acetyllysine is present on Lys57.

It belongs to the ATPase protein 8 family. As to quaternary structure, F-type ATPases have 2 components, CF(1) - the catalytic core - and CF(0) - the membrane proton channel. Component of an ATP synthase complex composed of ATP5PB, ATP5MC1, ATP5F1E, ATP5PD, ATP5ME, ATP5PF, ATP5MF, MT-ATP6, MT-ATP8, ATP5F1A, ATP5F1B, ATP5F1D, ATP5F1C, ATP5PO, ATP5MG, ATP5MK and ATP5MJ. Interacts with PRICKLE3.

The protein resides in the mitochondrion membrane. Mitochondrial membrane ATP synthase (F(1)F(0) ATP synthase or Complex V) produces ATP from ADP in the presence of a proton gradient across the membrane which is generated by electron transport complexes of the respiratory chain. F-type ATPases consist of two structural domains, F(1) - containing the extramembraneous catalytic core and F(0) - containing the membrane proton channel, linked together by a central stalk and a peripheral stalk. During catalysis, ATP synthesis in the catalytic domain of F(1) is coupled via a rotary mechanism of the central stalk subunits to proton translocation. Part of the complex F(0) domain. Minor subunit located with subunit a in the membrane. This chain is ATP synthase protein 8 (MT-ATP8), found in Artibeus jamaicensis (Jamaican fruit-eating bat).